Reading from the N-terminus, the 40-residue chain is Esterase-4 (40 aa).

Belongs to the type-B carboxylesterase/lipase family.

The catalysed reaction is a carboxylic ester + H2O = an alcohol + a carboxylate + H(+). The sequence is that of Esterase-4 (Est-4) from Drosophila mojavensis (Fruit fly).